The following is a 358-amino-acid chain: MSEKVKFEKRESLKEKPDTANLGFGQYFTDYMLSVDYDADQGWHDMKIVPYAPFEISPAAQGLHYGQAVFEGLKAYKHNGEVVLFRPDQNFKRINNSLARLEMPEVDEEALLEGLKQLVDVERDWVPEGEGQSLYIRPFVFATEGILGVRSSHQYKLLIILSPSGAYYGGDTLKSTKIYVEDEYVRAVRGGVGFAKVAGNYAASLLAQTNANKLGYDQVLWLDGVEQKYVEEVGSMNIFFVENGKVVTPALNGSILPGITRKSIIQLAEDLGYEVEERRVSIEELFNAYDKGELTEVFGSGTAAVISPVGTLRYEDREIVINNNEPGKITQKLYDTYTGIQSGKLEDKYGWRVEVPKY.

Residue Lys-196 is modified to N6-(pyridoxal phosphate)lysine.

Belongs to the class-IV pyridoxal-phosphate-dependent aminotransferase family. Requires pyridoxal 5'-phosphate as cofactor.

It carries out the reaction L-leucine + 2-oxoglutarate = 4-methyl-2-oxopentanoate + L-glutamate. The enzyme catalyses L-isoleucine + 2-oxoglutarate = (S)-3-methyl-2-oxopentanoate + L-glutamate. The catalysed reaction is L-valine + 2-oxoglutarate = 3-methyl-2-oxobutanoate + L-glutamate. It functions in the pathway amino-acid biosynthesis; L-isoleucine biosynthesis; L-isoleucine from 2-oxobutanoate: step 4/4. It participates in amino-acid biosynthesis; L-leucine biosynthesis; L-leucine from 3-methyl-2-oxobutanoate: step 4/4. The protein operates within amino-acid biosynthesis; L-valine biosynthesis; L-valine from pyruvate: step 4/4. Functionally, acts on leucine, isoleucine and valine. This is Probable branched-chain-amino-acid aminotransferase (ilvE) from Staphylococcus epidermidis (strain ATCC 35984 / DSM 28319 / BCRC 17069 / CCUG 31568 / BM 3577 / RP62A).